A 239-amino-acid polypeptide reads, in one-letter code: Superoxide dismutase 1 copper chaperone (239 aa).

Residues 7–70 enclose the HMA domain; sequence FYEATYAVPM…ALRDCGRDAI (64 aa). The Cu cation site is built by cysteine 18 and cysteine 21. Residues cysteine 28 and cysteine 65 are joined by a disulfide bond. Aspartate 163 is a Zn(2+) binding site. Positions 219 and 221 each coordinate Cu cation.

Belongs to the CCS1 family. Cu(2+) is required as a cofactor.

Its subcellular location is the cytoplasm. In terms of biological role, copper chaperone for superoxide dismutase 1 (SOD1). Binds copper ions and delivers them specifically to SOD1. This chain is Superoxide dismutase 1 copper chaperone (CCS1), found in Candida glabrata (strain ATCC 2001 / BCRC 20586 / JCM 3761 / NBRC 0622 / NRRL Y-65 / CBS 138) (Yeast).